The chain runs to 462 residues: L-seryl-tRNA(Sec) selenium transferase (462 aa).

Position 292 is an N6-(pyridoxal phosphate)lysine (Lys-292).

The protein belongs to the SelA family. Pyridoxal 5'-phosphate is required as a cofactor.

The protein resides in the cytoplasm. The catalysed reaction is L-seryl-tRNA(Sec) + selenophosphate + H(+) = L-selenocysteinyl-tRNA(Sec) + phosphate. It functions in the pathway aminoacyl-tRNA biosynthesis; selenocysteinyl-tRNA(Sec) biosynthesis; selenocysteinyl-tRNA(Sec) from L-seryl-tRNA(Sec) (bacterial route): step 1/1. In terms of biological role, converts seryl-tRNA(Sec) to selenocysteinyl-tRNA(Sec) required for selenoprotein biosynthesis. This chain is L-seryl-tRNA(Sec) selenium transferase, found in Clostridium perfringens (strain 13 / Type A).